The chain runs to 203 residues: MRRNWREHYNVFVANLALVLGFMLNIVVARYTLTGATPQARFLFLTPFLGIVAASIFYFFDVKWFLADYPYKKFHFQKKWTWTYLSGVFVFFANILVNVILLALLVNQMTNQILSEKYTGLLDNAYPLLWSAVGVSIFLSLISIGLSKTAHFKIDVEMLKAKKGEPTAADKTDSRPVVVDLDQTKSKKDGDNPPQASGDMTSL.

The next 4 helical transmembrane spans lie at 9 to 29 (YNVF…IVVA), 42 to 62 (FLFL…FFDV), 86 to 106 (SGVF…ALLV), and 126 to 146 (YPLL…SIGL). Composition is skewed to basic and acidic residues over residues 164 to 174 (GEPTAADKTDS) and 182 to 191 (DQTKSKKDGD). Positions 164–203 (GEPTAADKTDSRPVVVDLDQTKSKKDGDNPPQASGDMTSL) are disordered. Residues 194 to 203 (PQASGDMTSL) are compositionally biased toward polar residues.

The protein localises to the cell membrane. This is an uncharacterized protein from Mycoplasma pneumoniae (strain ATCC 29342 / M129 / Subtype 1) (Mycoplasmoides pneumoniae).